Consider the following 642-residue polypeptide: Threonine--tRNA ligase (642 aa).

A TGS domain is found at 1–61 (MPIITLPDGS…EEDASLEIIT (61 aa)). Residues 244–535 (DHRKIGKQLD…LIEEYAGFFP (292 aa)) form a catalytic region. Positions 335, 386, and 512 each coordinate Zn(2+).

This sequence belongs to the class-II aminoacyl-tRNA synthetase family. As to quaternary structure, homodimer. Requires Zn(2+) as cofactor.

It is found in the cytoplasm. The catalysed reaction is tRNA(Thr) + L-threonine + ATP = L-threonyl-tRNA(Thr) + AMP + diphosphate + H(+). In terms of biological role, catalyzes the attachment of threonine to tRNA(Thr) in a two-step reaction: L-threonine is first activated by ATP to form Thr-AMP and then transferred to the acceptor end of tRNA(Thr). Also edits incorrectly charged L-seryl-tRNA(Thr). The sequence is that of Threonine--tRNA ligase from Vibrio vulnificus (strain CMCP6).